Consider the following 146-residue polypeptide: Globin-1 (146 aa).

Residues 9-146 enclose the Globin domain; the sequence is QLTADVKKDL…KLVAVVQAAL (138 aa). Residue H101 participates in heme b binding.

This sequence belongs to the globin family. In terms of assembly, homodimer.

The protein localises to the cytoplasm. The protein is Globin-1 of Anadara inaequivalvis (Inequivalve ark).